The following is a 1481-amino-acid chain: DNA excision repair protein ERCC-6 (1481 aa).

Positions 1–506 (MFHEEVPNST…GFLFKKLFKY (506 aa)) are N-terminal domain; essential for its chromatin remodeling activity. Position 158 is a phosphoserine; by CDK2 (Ser-158). The residue at position 170 (Lys-170) is an N6-methylated lysine; by EHMT2. A Glycyl lysine isopeptide (Lys-Gly) (interchain with G-Cter in SUMO2) cross-link involves residue Lys-256. Lys-298 is subject to N6-methylated lysine; by EHMT2. The disordered stretch occupies residues 309–452 (AIETKADQRS…RKVARRQDDG (144 aa)). A compositionally biased stretch (basic residues) spans 327–337 (RLKKHSRKLQR). Positions 353–363 (KPLEPEVRPEA) are enriched in basic and acidic residues. Acidic residues-rich tracts occupy residues 378 to 390 (DGEE…EEEG) and 420 to 435 (EIDD…EDEA). 2 positions are modified to phosphoserine: Ser-428 and Ser-429. N6-methylated lysine; by EHMT2 is present on Lys-444. 2 positions are modified to phosphoserine: Ser-482 and Ser-485. Residues 515 to 691 (WELHCQQAGG…WSLFDFIFPG (177 aa)) enclose the Helicase ATP-binding domain. Residue 528–535 (DEMGLGKT) participates in ATP binding. Positions 642–645 (DEGH) match the DEAH box motif. The region spanning 839-998 (VVESLLKIWH…RRFFKSNDLY (160 aa)) is the Helicase C-terminal domain. Disordered stretches follow at residues 1040-1096 (LGTD…NRAS), 1114-1238 (SVMS…DRSS), and 1307-1372 (GHRG…GAPS). An N6-methylated lysine; by EHMT2 modification is found at Lys-1047. Residues 1138-1147 (ASTSEKQGSS) show a composition bias toward polar residues. Residues 1192-1201 (QPKQKAKNSK) are compositionally biased toward basic residues. Residues 1202-1212 (HCRDAKFEGTR) show a composition bias toward basic and acidic residues. Positions 1330–1345 (LPVQHPSSLTEKTQNN) are enriched in polar residues. Basic and acidic residues predominate over residues 1346-1364 (MKKEGKAHTPEHFSGKEDG). A CSA-interacting motif (CIM) motif is present at residues 1373–1385 (SSSLLARMRARNH). Residues 1387 to 1416 (ILPERLESDSEHLAEAAAVPPCGTEHDDLL) are ubiquitin-binding domain (UBD). The interval 1417-1481 (VDMRNFIAFQ…GIWKLKPEYC (65 aa)) is winged-helix domain (WHD). The interval 1434–1481 (STQEILQEFESKLSVAQSCVFRELLRNLCNFHRTPGGEGIWKLKPEYC) is essential for its interaction with RNA polymerase II, transcription-coupled nucleotide excision repair activity, association with chromatin after UV irradiation and for mediating the UV-induced translocation of ERRC8 to the nuclear matrix.

The protein belongs to the SNF2/RAD54 helicase family. In terms of assembly, homodimer. Binds DNA. Interacts with ERCC8. Interacts with RNA polymerase II; interaction is enhanced by UV irradiation. Component of the B-WICH complex, at least composed of SMARCA5/SNF2H, BAZ1B/WSTF, SF3B1, DEK, MYO1C, ERCC6, MYBBP1A and DDX21. Interacts with KIAA1530/UVSSA. Interacts with ELOA and CUL5; the interaction is induced by DNA damaging agents or by inhibitors of RNA polymerase II elongation. Interacts (via WHD region) with RIF1. Interacts with SMARCC2/BAF170, SMARCB1/BAF47 and the neuron-specific chromatin remodeling complex (nBAF complex). Interacts with ERCC5/XPG (via C-terminus); the interaction stimulates ERCC6/CSB binding to DNA repair bubble and ERCC6/CSB ATPase activity. May form a complex composed of RNA polymerase II, ERCC6/CSB and ERCC5/XPG which associates with the DNA repair bubble during transcription-coupled nucleotide excision repair. Interacts with CAND1, CSTF1, DDX3X, DDX5, DDX17, DDX23, DHX36, HDAC1, HNRNPU, MTA2, PRPF3, PSMD3, RBBP4, SFPQ, SMARCA1, SMARCA2, TOP1, USP7 and XRCC5. In terms of processing, phosphorylated in a cell cycle-dependent manner at Ser-158 by cyclin A-CDK2 in response to DNA damage. Phosphorylation at this site promotes the intramolecular interaction of the N-terminal domain with the helicase ATP-binding domain, thereby probably releasing the inhibitory effect of the N-terminal domain on its ATPase activity. Phosphorylation is essential for its chromatin remodeling activity. Post-translationally, ubiquitinated at the C-terminus. Ubiquitination by the CSA complex leads to ERCC6 proteasomal degradation in a UV-dependent manner. Stabilized following interaction with KIAA1530/UVSSA, which promotes recruitment of deubiquitinating enzyme USP7, leading to deubiquitination of ERCC6 thereby preventing UV-induced degradation of ERCC6 by the proteasome.

Its subcellular location is the nucleus. It is found in the chromosome. The enzyme catalyses ATP + H2O = ADP + phosphate + H(+). Essential factor involved in transcription-coupled nucleotide excision repair (TC-NER), a process during which RNA polymerase II-blocking lesions are rapidly removed from the transcribed strand of active genes. Plays a central role in the initiation of the TC-NER process: specifically recognizes and binds RNA polymerase II stalled at a lesion, and mediates recruitment of ERCC8/CSA, initiating DNA damage excision by TFIIH recruitment. Upon DNA-binding, it locally modifies DNA conformation by wrapping the DNA around itself, thereby modifying the interface between stalled RNA polymerase II and DNA. Acts as a chromatin remodeler at DSBs; DNA-dependent ATPase-dependent activity is essential for this function. Plays an important role in regulating the choice of the DNA double-strand breaks (DSBs) repair pathway and G2/M checkpoint activation; DNA-dependent ATPase activity is essential for this function. Regulates the DNA repair pathway choice by inhibiting non-homologous end joining (NHEJ), thereby promoting the homologous recombination (HR)-mediated repair of DSBs during the S/G2 phases of the cell cycle. Mediates the activation of the ATM- and CHEK2-dependent DNA damage responses thus preventing premature entry of cells into mitosis following the induction of DNA DSBs. Remodels chromatin by evicting histones from chromatin flanking DSBs, limiting RIF1 accumulation at DSBs thereby promoting BRCA1-mediated HR. Required for stable recruitment of ELOA and CUL5 to DNA damage sites. Also involved in UV-induced translocation of ERCC8 to the nuclear matrix. Essential for neuronal differentiation and neuritogenesis; regulates transcription and chromatin remodeling activities required during neurogenesis. This is DNA excision repair protein ERCC-6 (Ercc6) from Mus musculus (Mouse).